A 285-amino-acid polypeptide reads, in one-letter code: MSSFCLSKHLILVPILVMMAQLLLIRNVLSLNMNNPYLYHKCSANQGEYKLGSLYKKSLDSGIQQLSKDNEVFRGGFVYMDHTDPNGTLRVYITFQCRGDIYGSHCRSCFATARAELFKRCPRDKAAIIWYDQCFLEFSSISTGGKINYDDNICIDTARARPNAKTHTGDDSVLEFLRLFENLTNIAVTKRNNFVKDVEKPALYAAGEKRFGNKKIYVMVQCTHDLTPRACVECVNHNVRQFQDCYEDKPVGLKKGARVLGRSCNFRFERYPFVNAKTSPNYLKF.

Residues 1-30 form the signal peptide; sequence MSSFCLSKHLILVPILVMMAQLLLIRNVLS. 2 consecutive Gnk2-homologous domains span residues 37 to 143 and 161 to 273; these read YLYH…SIST and RPNA…RYPF.

It belongs to the cysteine-rich repeat secretory protein family.

It localises to the secreted. The polypeptide is Putative cysteine-rich repeat secretory protein 14 (CRRSP14) (Arabidopsis thaliana (Mouse-ear cress)).